A 197-amino-acid polypeptide reads, in one-letter code: Amino-terminal enhancer of split (197 aa).

The span at 1–15 (MMFPQSSSRHSGSSH) shows a compositional bias: low complexity. Disordered stretches follow at residues 1–20 (MMFPQSSSRHSGSSHMPQQL) and 169–197 (LGSQGHLPKEDKNGHEGDRRPDDDGDKSD). Residues 166 to 197 (LSALGSQGHLPKEDKNGHEGDRRPDDDGDKSD) are CCN domain. Residues 175–197 (LPKEDKNGHEGDRRPDDDGDKSD) show a composition bias toward basic and acidic residues.

The protein belongs to the WD repeat Groucho/TLE family. In terms of assembly, monomer. Post-translationally, ubiquitinated by XIAP/BIRC4. As to expression, predominantly expressed in brain, testis and ovary. Ubiquitously expressed in the developing embryo. Present in unfertilized and fertilized eggs.

Its subcellular location is the nucleus. May act as a transcriptional corepressor. Has a possible role in the negative regulation of proteins containing WD-40 repeats. May be required for the initiation and maintenance of the differentiated state. This chain is Amino-terminal enhancer of split (aes), found in Xenopus laevis (African clawed frog).